Consider the following 500-residue polypeptide: Glycerol kinase (500 aa).

Thr-14 provides a ligand contact to ADP. Residues Thr-14, Thr-15, and Ser-16 each coordinate ATP. Thr-14 provides a ligand contact to sn-glycerol 3-phosphate. Position 18 (Arg-18) interacts with ADP. Sn-glycerol 3-phosphate-binding residues include Arg-84, Glu-85, and Tyr-136. The glycerol site is built by Arg-84, Glu-85, and Tyr-136. His-232 is subject to Phosphohistidine; by HPr. Position 246 (Asp-246) interacts with sn-glycerol 3-phosphate. Glycerol-binding residues include Asp-246 and Gln-247. Residues Thr-268 and Gly-311 each contribute to the ADP site. ATP-binding residues include Thr-268, Gly-311, Gln-315, and Gly-412. Gly-412 and Asn-416 together coordinate ADP.

The protein belongs to the FGGY kinase family. As to quaternary structure, homotetramer and homodimer (in equilibrium). Post-translationally, the phosphoenolpyruvate-dependent sugar phosphotransferase system (PTS), including enzyme I, and histidine-containing protein (HPr) are required for the phosphorylation, which leads to the activation of the enzyme.

It carries out the reaction glycerol + ATP = sn-glycerol 3-phosphate + ADP + H(+). It participates in polyol metabolism; glycerol degradation via glycerol kinase pathway; sn-glycerol 3-phosphate from glycerol: step 1/1. With respect to regulation, activated by phosphorylation and inhibited by fructose 1,6-bisphosphate (FBP). Its function is as follows. Key enzyme in the regulation of glycerol uptake and metabolism. Catalyzes the phosphorylation of glycerol to yield sn-glycerol 3-phosphate. This chain is Glycerol kinase, found in Streptococcus uberis (strain ATCC BAA-854 / 0140J).